The chain runs to 173 residues: Photosystem I assembly protein Ycf3 (173 aa).

TPR repeat units lie at residues 35–68 (AYIY…EENK), 72–105 (GETL…NPKQ), and 120–153 (GRYA…YPGG).

Belongs to the Ycf3 family.

Its subcellular location is the cellular thylakoid membrane. Functionally, essential for the assembly of the photosystem I (PSI) complex. May act as a chaperone-like factor to guide the assembly of the PSI subunits. This Prochlorococcus marinus (strain MIT 9215) protein is Photosystem I assembly protein Ycf3.